A 1024-amino-acid chain; its full sequence is PH and SEC7 domain-containing protein 1 (1024 aa).

4 disordered regions span residues 25-98 (WLPE…GAQS), 113-230 (PLNG…EVSS), 246-401 (SLDP…GPDS), and 430-536 (ASPG…LDST). A compositionally biased stretch (pro residues) spans 71-95 (RGPPSPRVAPSPWAPSSPTGQPPPG). Residues S126 and S156 each carry the phosphoserine modification. Positions 215–230 (FLNQGDTWSSPREVSS) are enriched in polar residues. Over residues 300–313 (DIDEVLAEREEADS) the composition is skewed to acidic residues. Residues 327 to 342 (TAYPPAPRPGPLPGPH) show a composition bias toward pro residues. Residues 349–369 (NEDEDDDEAGGEEDVDDEVFE) show a composition bias toward acidic residues. The span at 445–463 (PPQPPAPRPDPPAPAPLAP) shows a compositional bias: pro residues. Residues 512 to 706 (GAAPLGSEPP…KALYSSIKNE (195 aa)) form the SEC7 domain. At S720 the chain carries Phosphoserine. A PH domain is found at 756-869 (AVYKHGALVR…WITRINVVAA (114 aa)). The stretch at 898–924 (LSQEEQVRTHEAKLKAMASELREHRAA) forms a coiled coil. The disordered stretch occupies residues 976 to 1024 (ALAQAGSTEDGLPPSHSSPSLQPKPSSQPRAQRHSSEPRPGAGSGRRKP). The segment covering 987–1004 (LPPSHSSPSLQPKPSSQP) has biased composition (low complexity).

This sequence belongs to the PSD family. As to quaternary structure, interacts with ACTN1. Interacts (ARF6-bound form) with KCNK1; does not interact with KCNK1 in the absence of ARF6. Isoform 2 is expressed in the brain.

Its subcellular location is the cell membrane. It localises to the cell projection. The protein localises to the ruffle membrane. It is found in the cleavage furrow. Its function is as follows. Guanine nucleotide exchange factor for ARF6. Induces cytoskeletal remodeling. The sequence is that of PH and SEC7 domain-containing protein 1 (PSD) from Homo sapiens (Human).